We begin with the raw amino-acid sequence, 660 residues long: DNA mismatch repair protein MutL (660 aa).

It belongs to the DNA mismatch repair MutL/HexB family.

This protein is involved in the repair of mismatches in DNA. It is required for dam-dependent methyl-directed DNA mismatch repair. May act as a 'molecular matchmaker', a protein that promotes the formation of a stable complex between two or more DNA-binding proteins in an ATP-dependent manner without itself being part of a final effector complex. The chain is DNA mismatch repair protein MutL from Streptococcus equi subsp. equi (strain 4047).